The sequence spans 408 residues: Translation initiation factor 2 subunit gamma (408 aa).

In terms of domain architecture, tr-type G spans 4-201 (QSEINIGLVG…TIEERIKTPK (198 aa)). A G1 region spans residues 13-20 (GHVDHGKT). Mg(2+)-binding residues include D16, T20, G41, and S43. 16–21 (DHGKTT) lines the GTP pocket. The G2 stretch occupies residues 41-45 (GISIR). Zn(2+)-binding residues include C56, C59, C71, and C74. The interval 88-91 (DAPG) is G3. GTP is bound by residues 144–147 (NKID) and 179–181 (SAQ). The tract at residues 144-147 (NKID) is G4. The segment at 179–181 (SAQ) is G5.

The protein belongs to the TRAFAC class translation factor GTPase superfamily. Classic translation factor GTPase family. EIF2G subfamily. Heterotrimer composed of an alpha, a beta and a gamma chain. It depends on Mg(2+) as a cofactor.

It catalyses the reaction GTP + H2O = GDP + phosphate + H(+). Its function is as follows. eIF-2 functions in the early steps of protein synthesis by forming a ternary complex with GTP and initiator tRNA. The sequence is that of Translation initiation factor 2 subunit gamma from Methanothermobacter thermautotrophicus (strain ATCC 29096 / DSM 1053 / JCM 10044 / NBRC 100330 / Delta H) (Methanobacterium thermoautotrophicum).